A 715-amino-acid chain; its full sequence is Polyribonucleotide nucleotidyltransferase (715 aa).

The Mg(2+) site is built by Asp485 and Asp491. Residues 552–611 (PRIHTMKIDPKKIKDVIGKGGAVIRALTEETGTSIDIDDDGTVKIAATDNNAAKAVMARI) enclose the KH domain. Residues 621 to 689 (NAIYKGKVTR…RQNRIRLTMK (69 aa)) enclose the S1 motif domain. The disordered stretch occupies residues 695-715 (TPVAENVTEEAEVSSEQQAEI).

Belongs to the polyribonucleotide nucleotidyltransferase family. Component of the RNA degradosome, which is a multiprotein complex involved in RNA processing and mRNA degradation. Mg(2+) serves as cofactor.

It localises to the cytoplasm. The enzyme catalyses RNA(n+1) + phosphate = RNA(n) + a ribonucleoside 5'-diphosphate. Its function is as follows. Involved in mRNA degradation. Catalyzes the phosphorolysis of single-stranded polyribonucleotides processively in the 3'- to 5'-direction. The chain is Polyribonucleotide nucleotidyltransferase from Actinobacillus pleuropneumoniae serotype 7 (strain AP76).